A 624-amino-acid polypeptide reads, in one-letter code: MSRFWHFKKFYFSSCFSKQRMSRRIIKNELLVPMKVTSKHEQEQPITNDEPRSLLSEDANPSPDVESEPELESEQSENREDVHEIIRSMVLGTGTTLPRLSNDSLTGIYNYWKLNPNDDLPLYNPTKYTPFEFHSQYNQDRSYISTPRLSVTKLLVFSWCELRSFYQVYSGSVRLPSTQAMTQGTKLHSKLEAEIHPEIDTTEIEQFLLSNAMSLGELQKAVPIEEDKVVFYLGEVERLAVDWAEMLIERLFSLIMGAEAREILLHGYLNFNNRSFVTNKDEIRDPSSVLVSGIVDYVKLQNLTNPSDGTLFDDIHGFVDDNFDQVDNVPLVDLSKFLPEAKQILQHYDFRLTFTDVKTRSAPQIPRQESVLEAAKFQTFYYRHFFQLLSRDSRFTYFSLIENAERRGHDVDKPLSILTTICLLRKHYHILFKDFVRLANGEPIGFAPFDDSAKSMAYDFVSVFQSSDEFSLANPNHTHFFEQLREIDGIEYDSILSPLLKVWKTPPTLRYLAARASQLFGVFEENLGDVTSVEYRLNKTSQLLSENVYEYDFSEFQVEVESASKFWNGEREAVPTEDLSRCSFCEFQSKCMVAGGNTTEAVEKKTIGPKIRHFLNECESSSKG.

A mitochondrion-targeting transit peptide spans 1–61 (MSRFWHFKKF…RSLLSEDANP (61 aa)). The disordered stretch occupies residues 37–80 (TSKHEQEQPITNDEPRSLLSEDANPSPDVESEPELESEQSENRE). Positions 65–75 (VESEPELESEQ) are enriched in acidic residues. 4 residues coordinate [4Fe-4S] cluster: Cys160, Cys582, Cys585, and Cys591.

This sequence belongs to the EXO5 family. As to quaternary structure, monomer. Requires Mg(2+) as cofactor. It depends on [4Fe-4S] cluster as a cofactor.

Its subcellular location is the mitochondrion. Functionally, single strand DNA specific 5'exonuclease involved in mitochondrial DNA replication and recombination. Releases dinucleotides as main products of catalysis. Has the capacity to slide across 5'double-stranded DNA or 5'RNA sequences and resumes cutting two nucleotides downstream of the double-stranded-to-single-stranded junction or RNA-to-DNA junction, respectively. The polypeptide is Exonuclease V, mitochondrial (EXO5) (Candida dubliniensis (strain CD36 / ATCC MYA-646 / CBS 7987 / NCPF 3949 / NRRL Y-17841) (Yeast)).